The sequence spans 704 residues: Polyribonucleotide nucleotidyltransferase (704 aa).

Mg(2+)-binding residues include Asp-490 and Asp-496. The 60-residue stretch at 557-616 folds into the KH domain; the sequence is PKIEMIQIKPAKIKDVIGKGGETINSIIDETGVKIDIDQDGNVSIASSDAEMIKKAIKII. Residues 626 to 694 form the S1 motif domain; the sequence is GQVYLAKVVR…KQGRVNVSRK (69 aa).

Belongs to the polyribonucleotide nucleotidyltransferase family. The cofactor is Mg(2+).

Its subcellular location is the cytoplasm. It carries out the reaction RNA(n+1) + phosphate = RNA(n) + a ribonucleoside 5'-diphosphate. Functionally, involved in mRNA degradation. Catalyzes the phosphorolysis of single-stranded polyribonucleotides processively in the 3'- to 5'-direction. In Enterococcus faecalis (strain ATCC 700802 / V583), this protein is Polyribonucleotide nucleotidyltransferase.